A 580-amino-acid polypeptide reads, in one-letter code: MGKGTDKLYITHSEWASEDAYSASAGAGVGKARRGVGEASFKRLPFRFCSLSLQPFEHPVCTQSGTIFDLTSILPWIKKHGTNPVDGTPLKGSDLIKLTIAKNDAGEYIDPVTYKVLTDNTHVVALRNTGNVFAWDTIERLNIKGKMWRDLVSDEEFTRKDIITLQDPQNIESRDLSRFNHIKEGESGLSDEQLREREDPSRNVNVNALGSSAKILKAREAVAKARQERAQKAGNAASTPVAKTDAPVKSAQKTASYQSGKPVPYNAARYTTGLAAASFTSTGMTPHTSAELALLSDEDYMLKRGRVKQKGYARISTTSGDINLELHTEYAPKAVWNFIKLAKKGYYKDVTFHRNIKGFMIQGGDPTGTGRGGESIWGKYFNDEFEGPLKHDSRGTLSMANKGKNTNSSQFFIAYRALPHLNLKHTIFGHVIDDPTPSSPTLNKLETHPVNPTTNRPTPDIRIVDVTIFVDPFEEFLKQKKQSEQSAENEANRTAENDEEGSRRAEDDQITWTGKRVRGPGASKEESSTTVGKYLKAALSERAAHDEDEIVEFVDEEPTSEPAKKKFKGIGGFGDFSSWD.

The U-box domain maps to 42–115; it reads KRLPFRFCSL…GEYIDPVTYK (74 aa). Disordered stretches follow at residues 182–201, 227–259, 439–459, 479–530, and 553–580; these read IKEGESGLSDEQLREREDPS, QERAQKAGNAASTPVAKTDAPVKSAQKTASYQS, SPTLNKLETHPVNPTTNRPTP, QKKQ…SSTT, and FVDEEPTSEPAKKKFKGIGGFGDFSSWD. A PPIase cyclophilin-type domain is found at 309–468; that stretch reads QKGYARISTT…PDIRIVDVTI (160 aa). Polar residues predominate over residues 439–457; sequence SPTLNKLETHPVNPTTNRP. Positions 490–507 are enriched in basic and acidic residues; the sequence is EANRTAENDEEGSRRAED.

Belongs to the cyclophilin-type PPIase family. PPIL2 subfamily.

It localises to the nucleus. It carries out the reaction [protein]-peptidylproline (omega=180) = [protein]-peptidylproline (omega=0). The enzyme catalyses S-ubiquitinyl-[E2 ubiquitin-conjugating enzyme]-L-cysteine + [acceptor protein]-L-lysine = [E2 ubiquitin-conjugating enzyme]-L-cysteine + N(6)-ubiquitinyl-[acceptor protein]-L-lysine.. Its pathway is protein modification; protein ubiquitination. Its function is as follows. May catalyze the cis-trans isomerization of proline imidic peptide bonds in oligopeptides thereby assisting the folding of proteins. May also function as a chaperone, playing a role in intracellular transport of proteins. May also have a protein ubiquitin ligase activity acting as an E3 ubiquitin protein ligase or as a ubiquitin-ubiquitin ligase promoting elongation of ubiquitin chains on proteins. The chain is Peptidyl-prolyl cis-trans isomerase-like 2 (cyp8) from Emericella nidulans (strain FGSC A4 / ATCC 38163 / CBS 112.46 / NRRL 194 / M139) (Aspergillus nidulans).